A 502-amino-acid polypeptide reads, in one-letter code: Phenylacetaldehyde dehydrogenase (502 aa).

Position 251 to 256 (Gly251 to Gly256) interacts with NAD(+). Catalysis depends on residues Glu273 and Cys307.

Belongs to the aldehyde dehydrogenase family.

It catalyses the reaction 2-phenylacetaldehyde + NAD(+) + H2O = 2-phenylacetate + NADH + 2 H(+). It participates in aromatic compound metabolism. Its function is as follows. Phenylacetaldehyde dehydrogenase that catalyzes the last step in the aerobic styrene degradation pathway by mediating oxidation of phenylacetaldehyde to phenylacetic acid. This chain is Phenylacetaldehyde dehydrogenase (styD), found in Pseudomonas fluorescens.